The primary structure comprises 127 residues: Large ribosomal subunit protein bL19 (127 aa).

Belongs to the bacterial ribosomal protein bL19 family.

In terms of biological role, this protein is located at the 30S-50S ribosomal subunit interface and may play a role in the structure and function of the aminoacyl-tRNA binding site. The polypeptide is Large ribosomal subunit protein bL19 (Jannaschia sp. (strain CCS1)).